We begin with the raw amino-acid sequence, 318 residues long: Protein-methionine-sulfoxide reductase catalytic subunit MsrP (318 aa).

The tat-type signal signal peptide spans M1–A40. Residues N72, Y75 to E76, C130, T165, N217, R222, and S233 to K235 each bind Mo-molybdopterin.

This sequence belongs to the MsrP family. As to quaternary structure, heterodimer of a catalytic subunit (MsrP) and a heme-binding subunit (MsrQ). The cofactor is Mo-molybdopterin. Predicted to be exported by the Tat system. The position of the signal peptide cleavage has not been experimentally proven.

The protein localises to the periplasm. The enzyme catalyses L-methionyl-[protein] + a quinone + H2O = L-methionyl-(S)-S-oxide-[protein] + a quinol. It carries out the reaction L-methionyl-[protein] + a quinone + H2O = L-methionyl-(R)-S-oxide-[protein] + a quinol. Functionally, part of the MsrPQ system that repairs oxidized periplasmic proteins containing methionine sulfoxide residues (Met-O), using respiratory chain electrons. Thus protects these proteins from oxidative-stress damage caused by reactive species of oxygen and chlorine generated by the host defense mechanisms. MsrPQ is essential for the maintenance of envelope integrity under bleach stress, rescuing a wide series of structurally unrelated periplasmic proteins from methionine oxidation. The catalytic subunit MsrP is non-stereospecific, being able to reduce both (R-) and (S-) diastereoisomers of methionine sulfoxide. The polypeptide is Protein-methionine-sulfoxide reductase catalytic subunit MsrP (Actinobacillus pleuropneumoniae serotype 5b (strain L20)).